We begin with the raw amino-acid sequence, 132 residues long: Large ribosomal subunit protein bL12 (132 aa).

The span at 102 to 126 (APKPIKEATNKDDAESIKKQLEEAG) shows a compositional bias: basic and acidic residues. A disordered region spans residues 102-132 (APKPIKEATNKDDAESIKKQLEEAGAKASVK).

Belongs to the bacterial ribosomal protein bL12 family. Homodimer. Part of the ribosomal stalk of the 50S ribosomal subunit. Forms a multimeric L10(L12)X complex, where L10 forms an elongated spine to which 2 to 4 L12 dimers bind in a sequential fashion. Binds GTP-bound translation factors.

Functionally, forms part of the ribosomal stalk which helps the ribosome interact with GTP-bound translation factors. Is thus essential for accurate translation. In Rippkaea orientalis (strain PCC 8801 / RF-1) (Cyanothece sp. (strain PCC 8801)), this protein is Large ribosomal subunit protein bL12.